The following is a 211-amino-acid chain: Protein DEHYDRATION-INDUCED 19 homolog 7 (211 aa).

The residue at position 113 (threonine 113) is a Phosphothreonine. The tract at residues 163-194 is disordered; it reads GDSVAQVSPKDTSKSKIQQESFSNEDQEKAKK. Residues 167–186 are compositionally biased toward polar residues; the sequence is AQVSPKDTSKSKIQQESFSN.

Belongs to the Di19 family. Post-translationally, not phosphorylated in vitro by CPK3 or CPK11. As to expression, expressed in seedlings, roots, leaves, stems, flowers and siliques.

The protein localises to the nucleus. Functionally, involved in both red and blue light signaling. This is Protein DEHYDRATION-INDUCED 19 homolog 7 (DI19-7) from Arabidopsis thaliana (Mouse-ear cress).